A 222-amino-acid polypeptide reads, in one-letter code: Beta-casein (222 aa).

The first 15 residues, 1-15 (MKVLILACLVALALA), serve as a signal peptide directing secretion. T27 is modified (phosphothreonine). 4 positions are modified to phosphoserine: S30, S32, S33, and S34.

The protein belongs to the beta-casein family. As to expression, mammary gland specific. Secreted in milk.

It localises to the secreted. Its function is as follows. Important role in determination of the surface properties of the casein micelles. The polypeptide is Beta-casein (CSN2) (Ovis aries (Sheep)).